A 137-amino-acid chain; its full sequence is uncharacterized protein (137 aa).

The disordered stretch occupies residues 1-26 (MKDKMWCEDTAQPHRRLPAPPSSSSP).

This is an uncharacterized protein from Homo sapiens (Human).